The primary structure comprises 600 residues: Forkhead box protein O (600 aa).

Threonine 49 bears the Phosphothreonine; by PKB/AKT1 mark. Serine 80 carries the phosphoserine modification. The segment at residues 100 to 206 (WGNLSYADLI…ETSRYEKRRG (107 aa)) is a DNA-binding region (fork-head). 4 disordered regions span residues 187–210 (KSVR…RAKK), 222–283 (GLND…LEPD), 319–364 (QQGF…TPGY), and 580–600 (LNAR…SWVH). Residue serine 195 is modified to Phosphoserine; by PKB/AKT1. Polar residues-rich tracts occupy residues 226–235 (ATPSPSSSVS) and 261–270 (RASSNASSCG). Serine 264 bears the Phosphoserine; by PKB/AKT1 mark. Residues serine 267, serine 268, and serine 273 each carry the phosphoserine modification. Over residues 330–342 (TQPPPPPYQPPQP) the composition is skewed to pro residues. The segment covering 343–354 (QQQQQQGQQPSP) has biased composition (low complexity).

Interacts with melt.

The protein localises to the cytoplasm. It is found in the nucleus. Its function is as follows. Transcription factor involved in the regulation of the insulin signaling pathway. Consistently activates both the downstream target Thor\d4EBP and the feedback control target InR. Involved in negative regulation of the cell cycle, modulating cell growth and proliferation. In response to cellular stresses, such as nutrient deprivation or increased levels of reactive oxygen species, foxo is activated and inhibits growth through the action of target genes such as Thor. Foxo activated in the adult fat body can regulate lifespan in adults; an insulin peptide itself may function as one secondary messenger of insulin-regulated aging. Also regulates Lip4, homolog of human acid lipases, thereby acting as a key modulator of lipid metabolism by insulin signaling and integrates insulin responses to glucose and lipid homeostasis. The polypeptide is Forkhead box protein O (Drosophila ananassae (Fruit fly)).